We begin with the raw amino-acid sequence, 158 residues long: MRETAKLILNSAFGKMIQKVIEDETNLISNAYSLRTFRDKFDSGYDLFQVSSHIDLIKGRLGKVDYSTSKPQHIGLFILDYTKKKMYDEIFSQTKVYYSDTDSALIEKSELLRLQQQGILKIGTDLGEYDVEMDDIGWLKVSTINTEDLNQPKAHDHL.

This is an uncharacterized protein from Aedes vexans (Inland floodwater mosquito).